Consider the following 178-residue polypeptide: Small ribosomal subunit protein uS4 (178 aa).

The 63-residue stretch at 104 to 166 (RRLQTIVYRK…PNSPMASENH (63 aa)) folds into the S4 RNA-binding domain. Positions 158–178 (NSPMASENHPERTAAVSEENQ) are disordered.

Belongs to the universal ribosomal protein uS4 family. Part of the 30S ribosomal subunit. Contacts protein S5. The interaction surface between S4 and S5 is involved in control of translational fidelity.

Its function is as follows. One of the primary rRNA binding proteins, it binds directly to 16S rRNA where it nucleates assembly of the body of the 30S subunit. With S5 and S12 plays an important role in translational accuracy. In Methanococcus maripaludis (strain C5 / ATCC BAA-1333), this protein is Small ribosomal subunit protein uS4.